Consider the following 100-residue polypeptide: Small ribosomal subunit protein uS14 (100 aa).

Belongs to the universal ribosomal protein uS14 family. Part of the 30S ribosomal subunit. Contacts proteins S3 and S10.

Functionally, binds 16S rRNA, required for the assembly of 30S particles and may also be responsible for determining the conformation of the 16S rRNA at the A site. The sequence is that of Small ribosomal subunit protein uS14 from Gloeothece citriformis (strain PCC 7424) (Cyanothece sp. (strain PCC 7424)).